A 443-amino-acid chain; its full sequence is Glutamyl-tRNA reductase (443 aa).

Residues 49 to 52 (TCNR), serine 109, 114 to 116 (ETQ), and glutamine 120 contribute to the substrate site. Catalysis depends on cysteine 50, which acts as the Nucleophile. 189–194 (GAGKMS) contributes to the NADP(+) binding site.

Belongs to the glutamyl-tRNA reductase family. Homodimer.

It carries out the reaction (S)-4-amino-5-oxopentanoate + tRNA(Glu) + NADP(+) = L-glutamyl-tRNA(Glu) + NADPH + H(+). The protein operates within porphyrin-containing compound metabolism; protoporphyrin-IX biosynthesis; 5-aminolevulinate from L-glutamyl-tRNA(Glu): step 1/2. Its function is as follows. Catalyzes the NADPH-dependent reduction of glutamyl-tRNA(Glu) to glutamate 1-semialdehyde (GSA). This Heliobacterium mobile (Heliobacillus mobilis) protein is Glutamyl-tRNA reductase.